Here is a 443-residue protein sequence, read N- to C-terminus: ATP synthase subunit b-delta (443 aa).

The ATP synthase subunit b stretch occupies residues 1 to 168 (MSTFIGQLIG…PSDAALDDAV (168 aa)). A helical transmembrane segment spans residues 4–24 (FIGQLIGFAVIVFLLVRFVVP). Positions 169–443 (GSRMRSTSRE…LASAETQLPD (275 aa)) are ATP synthase subunit delta.

The protein in the N-terminal section; belongs to the ATPase B chain family. In the C-terminal section; belongs to the ATPase delta chain family. F-type ATPases have 2 components, F(1) - the catalytic core - and F(0) - the membrane proton channel. F(1) has five subunits: alpha(3), beta(3), gamma(1), delta(1), epsilon(1). F(0) has three main subunits: a(1), b(2) and c(10-14). The alpha and beta chains form an alternating ring which encloses part of the gamma chain. F(1) is attached to F(0) by a central stalk formed by the gamma and epsilon chains, while a peripheral stalk is formed by the delta and b chains.

The protein resides in the cell membrane. In terms of biological role, f(1)F(0) ATP synthase produces ATP from ADP in the presence of a proton or sodium gradient. F-type ATPases consist of two structural domains, F(1) containing the extramembraneous catalytic core and F(0) containing the membrane proton channel, linked together by a central stalk and a peripheral stalk. During catalysis, ATP synthesis in the catalytic domain of F(1) is coupled via a rotary mechanism of the central stalk subunits to proton translocation. Functionally, this fusion protein includes a component of the F(0) channel (subunit b) and of the F(1) subunit (subunit delta). Two copies of subunit b and one of delta together form the peripheral 'stator' stalk which links F(1) to F(0). This Mycobacterium sp. (strain JLS) protein is ATP synthase subunit b-delta (atpFH).